Here is an 812-residue protein sequence, read N- to C-terminus: Phospholipase D alpha 1 (812 aa).

The propeptide occupies 1 to 46 (MAQMLLHGTLHATIFEAASLSNPHRASGSAPKFIRKFVEGIEDTVG). Positions 1–130 (MAQMLLHGTL…LNGEEIDRWL (130 aa)) constitute a C2 domain. Asp-190 contacts Ca(2+). One can recognise a PLD phosphodiesterase 1 domain in the interval 330–368 (TMFTHHQKIVVVDHELPNQGSQQRRIVSFVGGLDLCDGR). Active-site residues include His-335, Lys-337, and Asp-342. His-335 is an a 1,2-diacyl-sn-glycero-3-phosphate binding site. Ca(2+) contacts are provided by His-374 and His-408. Gln-524 and His-663 together coordinate a 1,2-diacyl-sn-glycero-3-phosphate. The region spanning 658–685 (FMIYVHTKMMIVDDEYIIIGSANINQRS) is the PLD phosphodiesterase 2 domain. Residues His-663, Lys-665, and Asp-670 contribute to the active site. Ca(2+) is bound at residue Glu-724.

It belongs to the phospholipase D family. C2-PLD subfamily. As to quaternary structure, monomer. The cofactor is Ca(2+). In terms of tissue distribution, expressed in leaves, roots, developing seeds and cultured cells.

The enzyme catalyses a 1,2-diacyl-sn-glycero-3-phosphocholine + H2O = a 1,2-diacyl-sn-glycero-3-phosphate + choline + H(+). Hydrolyzes glycerol-phospholipids at the terminal phosphodiesteric bond. Plays an important role in various cellular processes. The polypeptide is Phospholipase D alpha 1 (PLD1) (Oryza sativa subsp. japonica (Rice)).